We begin with the raw amino-acid sequence, 208 residues long: N-(5'-phosphoribosyl)anthranilate isomerase (208 aa).

This sequence belongs to the TrpF family.

The catalysed reaction is N-(5-phospho-beta-D-ribosyl)anthranilate = 1-(2-carboxyphenylamino)-1-deoxy-D-ribulose 5-phosphate. It participates in amino-acid biosynthesis; L-tryptophan biosynthesis; L-tryptophan from chorismate: step 3/5. The protein is N-(5'-phosphoribosyl)anthranilate isomerase of Methanothrix thermoacetophila (strain DSM 6194 / JCM 14653 / NBRC 101360 / PT) (Methanosaeta thermophila).